The primary structure comprises 142 residues: Small ribosomal subunit protein uS12 (142 aa).

The protein belongs to the universal ribosomal protein uS12 family. Part of the 30S ribosomal subunit.

In terms of biological role, with S4 and S5 plays an important role in translational accuracy. Located at the interface of the 30S and 50S subunits. This Thermoplasma acidophilum (strain ATCC 25905 / DSM 1728 / JCM 9062 / NBRC 15155 / AMRC-C165) protein is Small ribosomal subunit protein uS12.